The chain runs to 301 residues: 2-oxo-3-(phosphooxy)propyl 3-oxoalkanoate synthase (301 aa).

It belongs to the AfsA family.

It carries out the reaction a medium-chain 3-oxoacyl-[ACP] + dihydroxyacetone phosphate = a (4-alkanoyl-5-oxo-2,5-dihydrofuran-3-yl)methyl phosphate + holo-[ACP] + H2O. Involved in the biosynthesis of A factor (2-isocapryloyl-3R-hydroxymethyl-gamma-butyrolactone), a gamma-butyrolactone autoregulator that triggers secondary metabolism and morphogenesis in Streptomyces. Catalyzes beta-ketoacyl transfer from 8-methyl-3-oxononanoyl-acyl carrier protein (ACP) to the hydroxyl group of dihydroxyacetone phosphate (DHAP), thus producing an 8-methyl-3-oxononanoyl-DHAP ester. This Streptomyces griseus protein is 2-oxo-3-(phosphooxy)propyl 3-oxoalkanoate synthase.